Consider the following 410-residue polypeptide: G/T mismatch-specific thymine DNA glycosylase (410 aa).

Residues 37–97 (EQQMPEEVPA…SAKSKEKQEK (61 aa)) form a disordered region. The span at 66–97 (RTTEPKQPVEPKKPVESKKSGKSAKSKEKQEK) shows a compositional bias: basic and acidic residues. Residues Lys-103 and Lys-248 each participate in a glycyl lysine isopeptide (Lys-Gly) (interchain with G-Cter in SUMO2) cross-link. Residue Lys-330 forms a Glycyl lysine isopeptide (Lys-Gly) (interchain with G-Cter in SUMO); alternate linkage. A Glycyl lysine isopeptide (Lys-Gly) (interchain with G-Cter in SUMO2); alternate cross-link involves residue Lys-330.

Belongs to the uracil-DNA glycosylase (UDG) superfamily. TDG/mug family. In terms of assembly, homodimer. Interacts with AICDA and GADD45A. Post-translationally, sumoylation on Lys-330 by either SUMO1 or SUMO2 induces dissociation of the product DNA.

The protein localises to the nucleus. The catalysed reaction is Hydrolyzes mismatched double-stranded DNA and polynucleotides, releasing free thymine.. Its function is as follows. DNA glycosylase that plays a key role in active DNA demethylation: specifically recognizes and binds 5-formylcytosine (5fC) and 5-carboxylcytosine (5caC) in the context of CpG sites and mediates their excision through base-excision repair (BER) to install an unmethylated cytosine. Cannot remove 5-hydroxymethylcytosine (5hmC). According to an alternative model, involved in DNA demethylation by mediating DNA glycolase activity toward 5-hydroxymethyluracil (5hmU) produced by deamination of 5hmC. Also involved in DNA repair by acting as a thymine-DNA glycosylase that mediates correction of G/T mispairs to G/C pairs: in the DNA of higher eukaryotes, hydrolytic deamination of 5-methylcytosine to thymine leads to the formation of G/T mismatches. Its role in the repair of canonical base damage is however minor compared to its role in DNA demethylation. It is capable of hydrolyzing the carbon-nitrogen bond between the sugar-phosphate backbone of the DNA and a mispaired thymine. In addition to the G/T, it can remove thymine also from C/T and T/T mispairs in the order G/T &gt;&gt; C/T &gt; T/T. It has no detectable activity on apyrimidinic sites and does not catalyze the removal of thymine from A/T pairs or from single-stranded DNA. It can also remove uracil and 5-bromouracil from mispairs with guanine. The chain is G/T mismatch-specific thymine DNA glycosylase (TDG) from Homo sapiens (Human).